Here is a 280-residue protein sequence, read N- to C-terminus: Undecaprenyl-diphosphatase (280 aa).

8 consecutive transmembrane segments (helical) span residues 3–23 (IILL…EFLP), 45–65 (VDLF…YDYW), 88–108 (QLGL…FTFA), 115–135 (LFNP…IFYV), 150–170 (VSLK…IPGT), 191–211 (AEFS…LDFI), 225–245 (VLGI…RLLV), and 255–275 (IFAW…WGFG).

This sequence belongs to the UppP family.

The protein localises to the cell inner membrane. The catalysed reaction is di-trans,octa-cis-undecaprenyl diphosphate + H2O = di-trans,octa-cis-undecaprenyl phosphate + phosphate + H(+). In terms of biological role, catalyzes the dephosphorylation of undecaprenyl diphosphate (UPP). Confers resistance to bacitracin. The protein is Undecaprenyl-diphosphatase of Psychrobacter cryohalolentis (strain ATCC BAA-1226 / DSM 17306 / VKM B-2378 / K5).